Here is a 99-residue protein sequence, read N- to C-terminus: Small ribosomal subunit protein uS17 (99 aa).

This sequence belongs to the universal ribosomal protein uS17 family. As to quaternary structure, part of the 30S ribosomal subunit.

Its function is as follows. One of the primary rRNA binding proteins, it binds specifically to the 5'-end of 16S ribosomal RNA. The sequence is that of Small ribosomal subunit protein uS17 from Thermosipho africanus (strain TCF52B).